The chain runs to 215 residues: Pyrrolidone-carboxylate peptidase (215 aa).

Residues E80, C143, and H167 contribute to the active site.

This sequence belongs to the peptidase C15 family. As to quaternary structure, homotetramer.

It localises to the cytoplasm. It catalyses the reaction Release of an N-terminal pyroglutamyl group from a polypeptide, the second amino acid generally not being Pro.. In terms of biological role, removes 5-oxoproline from various penultimate amino acid residues except L-proline. The sequence is that of Pyrrolidone-carboxylate peptidase from Bacillus cereus (strain 03BB102).